Consider the following 311-residue polypeptide: Retron Ec78 reverse transcriptase (311 aa).

One can recognise a Reverse transcriptase domain in the interval 15–241 (DSGISAFLVT…HNRHVTGVTI (227 aa)). Mg(2+)-binding residues include Asp96, Asp187, and Asp188.

This sequence belongs to the bacterial reverse transcriptase family.

It catalyses the reaction DNA(n) + a 2'-deoxyribonucleoside 5'-triphosphate = DNA(n+1) + diphosphate. Its function is as follows. Reverse transcriptase (RT) component of antiviral defense system retron Ec78, composed of a non-coding RNA (ncRNA), this reverse transcriptase (RT), a probable ATPase and a putative HNH endonuclease. Expression of retron Ec78 confers protection against bacteriophage T5. At multiplicity of infection (MOI) of 0.02 cultures slow growth when infected with T5 but do not collapse, at MOI 2 cultures enter growth stasis. Responsible for synthesis of msDNA-Ec78 (a linear ssDNA with a 5'-terminal phosphate residue). Unlike most known msDNAs the mature product does not have an RNA component. The retron transcript serves as primer and template for the reaction, and codes for the RT. Not mutagenic when cloned in E.coli. It is thought to be synthesized as a branched RNA with a 2',5'-phosphodiester linkage to ssDNA; the linkage is cleaved endonucleolytically by ExoVII (xseA-xseB) leaving the observed mature 5'-ssDNA terminus. Overexpression of the ncRNA and RT, which leads to increased levels of msDNA, is not mutagenic in vivo. As the stem in the msDNA does not have a mismatch it probably does not bind or sequester MutS and/or MutL. The chain is Retron Ec78 reverse transcriptase from Escherichia coli.